Here is a 301-residue protein sequence, read N- to C-terminus: MSEPFKSGFVAIVGRPNVGKSTLLNHIIGQKIAIMSDKAQTTRNKVQGVYTTDESQIIFIDTPGIHKPKHKLGDFMVKIALNTFQEVDLIYFVIDASTGFGRGDEFIIEKLKNVQTPVFLLINKIDLIAPEDLFKLIEQYRDLMEFDEIIPISALQGNNVPNLLEQTNANLEIGPMYYPKDQITDHPERFIISELIREQVLQLTREEVPHSVAVVIEGIEKNPKTEKLTINATIIVERSTQKGIIIGKQGQMLKQIGMRARKEIERLLGSKVFLEVWVKVQKNWRDKEHYLQDYGFDREEY.

The region spanning 6–173 (KSGFVAIVGR…LEQTNANLEI (168 aa)) is the Era-type G domain. Residues 14–21 (GRPNVGKS) are G1. 14 to 21 (GRPNVGKS) contacts GTP. A G2 region spans residues 40–44 (QTTRN). Positions 61 to 64 (DTPG) are G3. GTP is bound by residues 61–65 (DTPGI) and 123–126 (NKID). Residues 123–126 (NKID) are G4. The segment at 152-154 (ISA) is G5. One can recognise a KH type-2 domain in the interval 204–282 (TREEVPHSVA…FLEVWVKVQK (79 aa)).

This sequence belongs to the TRAFAC class TrmE-Era-EngA-EngB-Septin-like GTPase superfamily. Era GTPase family. Monomer.

The protein localises to the cytoplasm. Its subcellular location is the cell membrane. Functionally, an essential GTPase that binds both GDP and GTP, with rapid nucleotide exchange. Plays a role in 16S rRNA processing and 30S ribosomal subunit biogenesis and possibly also in cell cycle regulation and energy metabolism. This is GTPase Era from Listeria monocytogenes serotype 4a (strain HCC23).